The chain runs to 458 residues: 3-isopropylmalate dehydratase large subunit (458 aa).

[4Fe-4S] cluster contacts are provided by cysteine 339, cysteine 399, and cysteine 402.

This sequence belongs to the aconitase/IPM isomerase family. LeuC type 1 subfamily. As to quaternary structure, heterodimer of LeuC and LeuD. Requires [4Fe-4S] cluster as cofactor.

It catalyses the reaction (2R,3S)-3-isopropylmalate = (2S)-2-isopropylmalate. It functions in the pathway amino-acid biosynthesis; L-leucine biosynthesis; L-leucine from 3-methyl-2-oxobutanoate: step 2/4. In terms of biological role, catalyzes the isomerization between 2-isopropylmalate and 3-isopropylmalate, via the formation of 2-isopropylmaleate. The polypeptide is 3-isopropylmalate dehydratase large subunit (Lactococcus lactis subsp. cremoris (strain MG1363)).